The following is a 391-amino-acid chain: Oocyte zinc finger protein XlCOF7.2 (391 aa).

4 C2H2-type zinc fingers span residues 284-306, 312-334, 340-362, and 368-391; these read FPCS…YRTH, YPCS…RRIH, SSCS…HRTH, and YSCS…RRTH.

The protein belongs to the krueppel C2H2-type zinc-finger protein family.

It is found in the nucleus. May be involved in transcriptional regulation. This is Oocyte zinc finger protein XlCOF7.2 from Xenopus laevis (African clawed frog).